A 1691-amino-acid polypeptide reads, in one-letter code: Collagen alpha-6(IV) chain (1691 aa).

The N-terminal stretch at 1–22 is a signal peptide; that stretch reads MLINKLWLLLVTLCLTEELAAA. The 7S domain stretch occupies residues 23–46; sequence GEKSYGKPCGGQDCSGSCQCFPEK. Residues 47 to 1463 are triple-helical region; the sequence is GARGRPGPIG…FGMPGMPGQS (1417 aa). 5 disordered regions span residues 108-338, 404-473, 486-881, 915-1099, and 1185-1459; these read IPGH…EGQK, GFPG…LGLK, GGVP…KGSP, GIPG…KGRD, and THGT…MPGM. Residue Asn-127 is glycosylated (N-linked (GlcNAc...) asparagine). Low complexity predominate over residues 185-197; sequence PQGAPGFPGAVGP. The segment covering 198 to 213 has biased composition (pro residues); sequence AGPPGLQGPPGPPGPL. 2 stretches are compositionally biased toward low complexity: residues 311-320 and 421-431; these read QGPPGQQGKK and GAAGLPGRDGL. Pro residues-rich tracts occupy residues 432–443 and 491–502; these read PGPPGPPGPPSP and TGPPGEPGPPGP. A compositionally biased stretch (low complexity) spans 503–512; that stretch reads WGLIGLPGLK. The short motif at 515-517 is the Cell attachment site element; the sequence is RGD. Positions 526 to 541 are enriched in low complexity; that stretch reads PAGAPGLVGPLGPSGP. The Cell attachment site signature appears at 560 to 562; that stretch reads RGD. Residues 588–599 are compositionally biased toward gly residues; that stretch reads GLPGDGGQGFPG. Low complexity-rich tracts occupy residues 641 to 652, 660 to 703, 722 to 735, and 802 to 820; these read LPGQQGLPGSKG, PGSY…GSPG, LPGF…DGLP, and SPGT…SSGP. Residues 842 to 851 show a composition bias toward basic residues; the sequence is PGKKGTRGKK. Positions 853–878 are enriched in low complexity; that stretch reads PPGSIVKKGLPGLKGLPGNPGLVGLK. The Cell attachment site signature appears at 986–988; it reads RGD. The span at 1055 to 1068 shows a compositional bias: low complexity; it reads SPGLPGASGLPGLK. The segment covering 1210-1220 has biased composition (gly residues); sequence GYPGIGIGAPG. The span at 1234–1253 shows a compositional bias: low complexity; it reads PGLQGPAGLPGAPGISLPSL. Positions 1275-1284 are enriched in pro residues; the sequence is PAGPPGPPGP. The span at 1360–1371 shows a compositional bias: polar residues; it reads SGLQGDPGQTPT. 2 stretches are compositionally biased toward low complexity: residues 1384-1397 and 1429-1459; these read LPGI…TGDP and ALGD…MPGM. A Collagen IV NC1 domain is found at 1467–1691; it reads GYTLVKHSQS…SRCQVCMKSL (225 aa). 6 cysteine pairs are disulfide-bonded: Cys-1482–Cys-1571, Cys-1515–Cys-1568, Cys-1527–Cys-1533, Cys-1590–Cys-1687, Cys-1624–Cys-1684, and Cys-1636–Cys-1643.

Belongs to the type IV collagen family. As to quaternary structure, there are six type IV collagen isoforms, alpha 1(IV)-alpha 6(IV), each of which can form a triple helix structure with 2 other chains to generate type IV collagen network. Post-translationally, prolines at the third position of the tripeptide repeating unit (G-X-Y) are hydroxylated in some or all of the chains. Type IV collagens contain numerous cysteine residues which are involved in inter- and intramolecular disulfide bonding. 12 of these, located in the NC1 domain, are conserved in all known type IV collagens. In terms of processing, the trimeric structure of the NC1 domains is stabilized by covalent bonds between Lys and Met residues.

The protein resides in the secreted. The protein localises to the extracellular space. It is found in the extracellular matrix. It localises to the basement membrane. Its function is as follows. Type IV collagen is the major structural component of glomerular basement membranes (GBM), forming a 'chicken-wire' meshwork together with laminins, proteoglycans and entactin/nidogen. The chain is Collagen alpha-6(IV) chain (COL4A6) from Homo sapiens (Human).